The following is a 245-amino-acid chain: 1-(5-phosphoribosyl)-5-[(5-phosphoribosylamino)methylideneamino] imidazole-4-carboxamide isomerase (245 aa).

The active-site Proton acceptor is the Asp10. The Proton donor role is filled by Asp135.

This sequence belongs to the HisA/HisF family.

The protein resides in the cytoplasm. The catalysed reaction is 1-(5-phospho-beta-D-ribosyl)-5-[(5-phospho-beta-D-ribosylamino)methylideneamino]imidazole-4-carboxamide = 5-[(5-phospho-1-deoxy-D-ribulos-1-ylimino)methylamino]-1-(5-phospho-beta-D-ribosyl)imidazole-4-carboxamide. Its pathway is amino-acid biosynthesis; L-histidine biosynthesis; L-histidine from 5-phospho-alpha-D-ribose 1-diphosphate: step 4/9. This chain is 1-(5-phosphoribosyl)-5-[(5-phosphoribosylamino)methylideneamino] imidazole-4-carboxamide isomerase, found in Methanosarcina barkeri (strain Fusaro / DSM 804).